Reading from the N-terminus, the 885-residue chain is MAGVNEIRSTFLDYYRKNGHEVVPSSPLVPRNDPTLMFTNAGMVQFKNVFTGLEHRSYNRATTSQKCVRAGGKHNDLDNVGYTARHHTFFEMLGNFSFGDYFKEDAISFAWNLITKEFGLPKDKLLVTVYHTDDDAANYWKKIAGLSDDRIIRIATSDNFWAMGDTGPCGPCSEIFFDHGDHIWGGPPGSADEDGDRFIEIWNLVFMQFEQITPEQRIDLPRPSIDTGMGLERVAAVLQGVHDNYDIDLFKALIRASEEATGVKAEGEFRASHRVIADHLRASSFLIADGVLPSNEGRGYVLRRIMRRAMRHAQLLGAKEPLMWRLLPALIREMGQAYPELIRADALISETLKLEETRFRKTLDRGLGLLSDATESLVEGDRLDGETAFKLYDTYGFPLDLTQDALRQRGIAVDTDGFSAAMQRQKAEARANWAGSGEAATETIWFGIKDKVGATEFLGYETEVAEGVITALVRDGAEVQSAAEGDVVSVVVNQTPFYGESGGQQGDTGTISGEGFAIAIKDTQKKGEGVFVHIGEVTKGTAKTGDAVELKVDSVRRTRIRSNHSATHLLHEALRETLGSHVAQKGSLVAPDRLRFDFSHPKPISAEELTQVENLANEIILQNAPVSTRLMAVDDAIAEGAMALFGEKYGDEVRVVSMGTAKHGSKEGKAYSVELCGGTHVRQTGDIGLVRIVSEGAVAAGVRRMEALTGEAARLYLEEQDERVKAIAGALKTTPSEALERVNALLDERKKLERELADARKKLALGGGSADGGSAVEAVNGVNFLGKIVTGVSPRDLKPLADEGKKQVGSGVVLFIGIGEDSKASAVAAVTEDLVGRFSAVDLVRAASVALGGAGGGGRPDMAQAGGPDGDKADAAIAAVKALII.

Zn(2+) is bound by residues His-564, His-568, Cys-676, and His-680.

This sequence belongs to the class-II aminoacyl-tRNA synthetase family. Zn(2+) is required as a cofactor.

The protein resides in the cytoplasm. The enzyme catalyses tRNA(Ala) + L-alanine + ATP = L-alanyl-tRNA(Ala) + AMP + diphosphate. Catalyzes the attachment of alanine to tRNA(Ala) in a two-step reaction: alanine is first activated by ATP to form Ala-AMP and then transferred to the acceptor end of tRNA(Ala). Also edits incorrectly charged Ser-tRNA(Ala) and Gly-tRNA(Ala) via its editing domain. This is Alanine--tRNA ligase from Brucella anthropi (strain ATCC 49188 / DSM 6882 / CCUG 24695 / JCM 21032 / LMG 3331 / NBRC 15819 / NCTC 12168 / Alc 37) (Ochrobactrum anthropi).